The chain runs to 405 residues: Accessory Sec system protein translocase subunit SecY2 (405 aa).

10 helical membrane passes run 14–34, 65–85, 104–124, 131–151, 156–176, 191–211, 247–267, 285–305, 343–363, and 368–388; these read LFTS…LPFV, IFSV…MFSF, MYLT…RLPV, ILVV…LVWL, ASMG…LNIP, GIIV…ALMY, MYVM…GFIF, PLWV…FAFV, FSVI…LFVL, and LLRL…IFTI.

Belongs to the SecY/SEC61-alpha family. SecY2 subfamily. Component of the accessory SecA2/SecY2 protein translocase complex required to export cell wall proteins. May form heterotrimers with SecE and SecG subunits.

Its subcellular location is the cell membrane. Functionally, part of the accessory SecA2/SecY2 system specifically required for export of possible cell wall proteins. The central subunit of a protein translocation channel. In Streptococcus pneumoniae serotype 4 (strain ATCC BAA-334 / TIGR4), this protein is Accessory Sec system protein translocase subunit SecY2.